The sequence spans 436 residues: MSQALPLVTRQGDRIAIVSGLRTPFARQATAFHGIPAVDLGKMVVGEMLARSEISPDVIEQLVFGQVVQMPEAPNVAREIVLGTGMSVHTDAYSVSRACATSFQAVANVAESLMTGTIRAGIAGGADSSSVLPIGVSKKLARVLVDVNKARTMGLRLKLFSQLRLRDLAPVPPAVAEYSTGLRMGDTAEQMAKTYGITREQQDALAHRSHQRAALAWSEGKLGDEVMTVYIPPFREPLSEDNNIRGTSTLADYAKLRPAFDRKHGTVTAANSTPLTDGAAAVILMTESRAKELGLVPLGYLRSYAFTAIDVWQDMLLGPAWSTPLALERAGLTLSDLTLIDMHEAFAAQTLANLQLLGSERFARDVLGRAHATGEVDESKFNVLGGSIAYGHPFAATGARMITQTLHELRRRGGGFGLVTACAAGGLGAAMVLEAE.

The Acyl-thioester intermediate role is filled by Cys-99. Residues His-392 and Cys-422 each act as proton acceptor in the active site.

It belongs to the thiolase-like superfamily. Thiolase family. In terms of assembly, heterotetramer of two alpha chains (FadJ) and two beta chains (FadI).

It localises to the cytoplasm. It catalyses the reaction an acyl-CoA + acetyl-CoA = a 3-oxoacyl-CoA + CoA. The protein operates within lipid metabolism; fatty acid beta-oxidation. In terms of biological role, catalyzes the final step of fatty acid oxidation in which acetyl-CoA is released and the CoA ester of a fatty acid two carbons shorter is formed. This is 3-ketoacyl-CoA thiolase from Enterobacter sp. (strain 638).